A 1059-amino-acid polypeptide reads, in one-letter code: Carbamoyl phosphate synthase large chain (1059 aa).

Positions 1 to 401 (MPKRKDIQKI…SLLKACRSLE (401 aa)) are carboxyphosphate synthetic domain. 12 residues coordinate ATP: R129, R169, G175, G176, R208, I210, E215, G241, I242, H243, Q284, and E298. The 195-residue stretch at 133 to 327 (KQLMEELGQP…IAKLAAKIAV (195 aa)) folds into the ATP-grasp 1 domain. Mg(2+) is bound by residues Q284, E298, and N300. Mn(2+) contacts are provided by Q284, E298, and N300. An oligomerization domain region spans residues 402–546 (VCVDHNELPA…YSTYGFENES (145 aa)). The segment at 547 to 929 (VKSSKESVLV…ALYKAFEASY (383 aa)) is carbamoyl phosphate synthetic domain. An ATP-grasp 2 domain is found at 671-861 (EQALKELDIP…MAQVATRLIL (191 aa)). 10 residues coordinate ATP: R707, S746, I748, E752, G777, V778, H779, S780, Q820, and E832. Mg(2+) contacts are provided by Q820, E832, and N834. Residues Q820, E832, and N834 each contribute to the Mn(2+) site. The MGS-like domain maps to 930–1059 (LHLPNFGNIV…ESRSFTTEAI (130 aa)). Residues 930–1059 (LHLPNFGNIV…ESRSFTTEAI (130 aa)) form an allosteric domain region.

Belongs to the CarB family. As to quaternary structure, composed of two chains; the small (or glutamine) chain promotes the hydrolysis of glutamine to ammonia, which is used by the large (or ammonia) chain to synthesize carbamoyl phosphate. Tetramer of heterodimers (alpha,beta)4. It depends on Mg(2+) as a cofactor. Requires Mn(2+) as cofactor.

The catalysed reaction is hydrogencarbonate + L-glutamine + 2 ATP + H2O = carbamoyl phosphate + L-glutamate + 2 ADP + phosphate + 2 H(+). The enzyme catalyses hydrogencarbonate + NH4(+) + 2 ATP = carbamoyl phosphate + 2 ADP + phosphate + 2 H(+). It participates in amino-acid biosynthesis; L-arginine biosynthesis; carbamoyl phosphate from bicarbonate: step 1/1. Its pathway is pyrimidine metabolism; UMP biosynthesis via de novo pathway; (S)-dihydroorotate from bicarbonate: step 1/3. Functionally, large subunit of the glutamine-dependent carbamoyl phosphate synthetase (CPSase). CPSase catalyzes the formation of carbamoyl phosphate from the ammonia moiety of glutamine, carbonate, and phosphate donated by ATP, constituting the first step of 2 biosynthetic pathways, one leading to arginine and/or urea and the other to pyrimidine nucleotides. The large subunit (synthetase) binds the substrates ammonia (free or transferred from glutamine from the small subunit), hydrogencarbonate and ATP and carries out an ATP-coupled ligase reaction, activating hydrogencarbonate by forming carboxy phosphate which reacts with ammonia to form carbamoyl phosphate. The protein is Carbamoyl phosphate synthase large chain of Streptococcus sanguinis (strain SK36).